A 180-amino-acid chain; its full sequence is Der GTPase-activating protein YihI (180 aa).

The segment covering 1–10 (MKQPARTSQV) has biased composition (polar residues). 2 disordered regions span residues 1–102 (MKQP…PRLT) and 158–180 (DAED…RTPE). Positions 21-32 (TREEINQEARDR) are enriched in basic and acidic residues. Positions 45 to 54 (SRANPATVSQ) are enriched in polar residues. Residues 55 to 67 (KGDKSQSVKDPRI) are compositionally biased toward basic and acidic residues. The segment covering 84-93 (PANPVKAAKP) has biased composition (low complexity).

It belongs to the YihI family. In terms of assembly, interacts with Der.

Its function is as follows. A GTPase-activating protein (GAP) that modifies Der/EngA GTPase function. May play a role in ribosome biogenesis. This chain is Der GTPase-activating protein YihI, found in Erwinia tasmaniensis (strain DSM 17950 / CFBP 7177 / CIP 109463 / NCPPB 4357 / Et1/99).